Consider the following 131-residue polypeptide: Jacalin-related lectin 15 (131 aa).

A Jacalin-type lectin domain is found at 1-126 (MSTPSGSNPL…LTSLGAYFAP (126 aa)).

It belongs to the jacalin lectin family. In terms of tissue distribution, expressed in the vascular and surrounding tissues in cotyledons. Detected in root apical meristems.

This is Jacalin-related lectin 15 (JAL15) from Arabidopsis thaliana (Mouse-ear cress).